A 1066-amino-acid chain; its full sequence is Zinc finger and BTB domain-containing protein 21 (1066 aa).

Residues 30–96 (CDVLLIVGDQ…IYSSSLFVEK (67 aa)) enclose the BTB domain. The segment at 30-96 (CDVLLIVGDQ…IYSSSLFVEK (67 aa)) is mediates homodimerization. A Glycyl lysine isopeptide (Lys-Gly) (interchain with G-Cter in SUMO1); alternate cross-link involves residue Lys-40. Residue Lys-40 forms a Glycyl lysine isopeptide (Lys-Gly) (interchain with G-Cter in SUMO2); alternate linkage. The span at 154–177 (SRNEAQGKTVSQNQPDVSHTSRPS) shows a compositional bias: polar residues. The tract at residues 154–196 (SRNEAQGKTVSQNQPDVSHTSRPSPSIAVKANTNKPHVPKPIE) is disordered. Residues Lys-255, Lys-266, Lys-273, Lys-312, and Lys-337 each participate in a glycyl lysine isopeptide (Lys-Gly) (interchain with G-Cter in SUMO2) cross-link. Phosphoserine occurs at positions 345 and 381. A Glycyl lysine isopeptide (Lys-Gly) (interchain with G-Cter in SUMO2) cross-link involves residue Lys-383. A compositionally biased stretch (basic and acidic residues) spans 388-399 (DCSEKTALDDRP). Disordered regions lie at residues 388 to 442 (DCSE…DPSD), 454 to 485 (TAAA…AKRR), and 498 to 525 (KVNE…ADFP). A phosphoserine mark is found at Ser-411 and Ser-422. Lys-430 participates in a covalent cross-link: Glycyl lysine isopeptide (Lys-Gly) (interchain with G-Cter in SUMO2). Position 431 is a phosphothreonine (Thr-431). Ser-434, Ser-435, and Ser-438 each carry phosphoserine. Residues 466–478 (LSLKTEDDQKDMS) are compositionally biased toward basic and acidic residues. Residues Lys-469 and Lys-475 each participate in a glycyl lysine isopeptide (Lys-Gly) (interchain with G-Cter in SUMO2) cross-link. C2H2-type zinc fingers lie at residues 546–569 (FKCK…NMYH) and 575–598 (YACD…QTQH). Position 605 is a phosphoserine (Ser-605). Residues Lys-617, Lys-643, and Lys-659 each participate in a glycyl lysine isopeptide (Lys-Gly) (interchain with G-Cter in SUMO2) cross-link. Residues 670–692 (YICTYCGKAYRFLSQFKQHIKMH) form a C2H2-type 3 zinc finger. Residue Lys-702 forms a Glycyl lysine isopeptide (Lys-Gly) (interchain with G-Cter in SUMO2) linkage. At Ser-714 the chain carries Phosphoserine. The C2H2-type 4; atypical zinc finger occupies 748 to 770 (AVCPYCSLRFFSPELKQEHESKC). Residues Lys-763 and Lys-785 each participate in a glycyl lysine isopeptide (Lys-Gly) (interchain with G-Cter in SUMO2) cross-link. The C2H2-type 5 zinc finger occupies 775–798 (LTCLECMRTFKSSFSIWRHQVEVH). Residues 806–840 (TENFSLPVLDHNGDVTGSSRPQSQPEPNKVNHIVT) are disordered. The segment covering 820-831 (VTGSSRPQSQPE) has biased composition (polar residues). Lys-875 participates in a covalent cross-link: Glycyl lysine isopeptide (Lys-Gly) (interchain with G-Cter in SUMO2). A Glycyl lysine isopeptide (Lys-Gly) (interchain with G-Cter in SUMO1); alternate cross-link involves residue Lys-879. Lys-879 participates in a covalent cross-link: Glycyl lysine isopeptide (Lys-Gly) (interchain with G-Cter in SUMO2); alternate. The interval 879-906 (KEEPVEEAEEEAPEASTAPKEAGPSKEA) is disordered. Residues 882–891 (PVEEAEEEAP) are compositionally biased toward acidic residues. Residues 909–932 (WPCEKCGKMFTVHKQLERHQELLC) form a C2H2-type 6; atypical zinc finger. Lys-935 participates in a covalent cross-link: Glycyl lysine isopeptide (Lys-Gly) (interchain with G-Cter in SUMO2). Residues 937–959 (FICHVCNKAFRTNFRLWSHFQSH) form a C2H2-type 7 zinc finger. Residues 963 to 1014 (ASEESAHKESEVCPVPTNSPSPPPLPPPPPLPKIQPLEPDSPTGLSENPTPA) are disordered. The segment covering 979-995 (TNSPSPPPLPPPPPLPK) has biased composition (pro residues). Residue Ser-1003 is modified to Phosphoserine. A C2H2-type 8 zinc finger spans residues 1043–1065 (FMCKLCHRTFKTAFSLWSHEQTH).

As to quaternary structure, homodimer. Interacts with ZBTB14. Ubiquitous in fetal and adult tissues.

It is found in the nucleus. Its function is as follows. Acts as a transcription repressor. This chain is Zinc finger and BTB domain-containing protein 21 (ZBTB21), found in Homo sapiens (Human).